A 769-amino-acid chain; its full sequence is Calcium up-regulated protein B (769 aa).

The segment at 1–22 (MINIEDISKSSNQSEEKQLKST) is disordered. Ricin B-type lectin domains follow at residues 25-145 (KPKY…WTTF) and 158-296 (FQSK…WITN).

It belongs to the cup family.

The protein resides in the cytoplasm. Its subcellular location is the membrane. In terms of biological role, may play an important role in stabilizing and/or regulating the cell membrane during Ca(2+) stress or certain stages of development. In Dictyostelium discoideum (Social amoeba), this protein is Calcium up-regulated protein B (cupB).